A 382-amino-acid chain; its full sequence is SOX domain-containing protein dichaete (382 aa).

Disordered stretches follow at residues Gly-53–Ile-142 and Tyr-346–Tyr-382. Gly residues predominate over residues Ala-60 to Gly-69. The span at Asn-96–Gly-123 shows a compositional bias: low complexity. The segment at residues Ile-142–Lys-210 is a DNA-binding region (HMG box). Low complexity predominate over residues Pro-347–Thr-360.

In terms of tissue distribution, initially expressed in a pair-rule-like pattern which is rapidly replaced by strong neuroectoderm expression.

Its subcellular location is the nucleus. Its function is as follows. Essential for segmentation and CNS development. May modulate the actions of other transcription factors, including gap and pair-rule proteins. This Drosophila melanogaster (Fruit fly) protein is SOX domain-containing protein dichaete (D).